Here is a 263-residue protein sequence, read N- to C-terminus: Acetylglutamate kinase (263 aa).

Residues Gly-48–Gly-49, Arg-70, and Asn-162 contribute to the substrate site.

Belongs to the acetylglutamate kinase family. ArgB subfamily.

The protein resides in the cytoplasm. It carries out the reaction N-acetyl-L-glutamate + ATP = N-acetyl-L-glutamyl 5-phosphate + ADP. It participates in amino-acid biosynthesis; L-arginine biosynthesis; N(2)-acetyl-L-ornithine from L-glutamate: step 2/4. In terms of biological role, catalyzes the ATP-dependent phosphorylation of N-acetyl-L-glutamate. The protein is Acetylglutamate kinase of Vibrio vulnificus (strain YJ016).